We begin with the raw amino-acid sequence, 180 residues long: Sperm protein associated with the nucleus on the X chromosome N2 (180 aa).

2 disordered regions span residues 1-46 (MEQP…KTKT) and 64-180 (NSNQ…GGED). The span at 10 to 26 (GEKRKSPCESNNKKNDE) shows a compositional bias: basic and acidic residues. Residues 82–169 (QEEEDEGLDS…SSQEDEDLDS (88 aa)) are compositionally biased toward acidic residues. Positions 170 to 180 (SEGSSQEGGED) are enriched in low complexity.

This sequence belongs to the SPAN-X family.

This chain is Sperm protein associated with the nucleus on the X chromosome N2 (SPANXN2), found in Homo sapiens (Human).